The following is a 118-amino-acid chain: MRNKYIQAFEDAQIASKSVPDFRAGDTLRVAIRIHEGDKTRVQNFEGICIARRGSGVGETFIIRKIGANSVGVERIFPIYSDSIEEIVVLRKGRVRRAKLFYLRDLRGKAAKIRELRK.

This sequence belongs to the bacterial ribosomal protein bL19 family.

Its function is as follows. This protein is located at the 30S-50S ribosomal subunit interface and may play a role in the structure and function of the aminoacyl-tRNA binding site. This chain is Large ribosomal subunit protein bL19, found in Campylobacter curvus (strain 525.92).